Here is a 520-residue protein sequence, read N- to C-terminus: Sterile alpha motif domain-containing protein 3 (520 aa).

The SAM domain occupies 4–71 (WSVDQVCKWL…KYKQGNQELK (68 aa)). The interval 67–104 (NQELKPTGGPADTSTLTPAQAAPEHEQNPSPTSHGDQT) is disordered. Residues 94–104 (NPSPTSHGDQT) show a composition bias toward polar residues.

The chain is Sterile alpha motif domain-containing protein 3 (Samd3) from Mus musculus (Mouse).